Reading from the N-terminus, the 325-residue chain is ATP phosphoribosyltransferase (325 aa).

It belongs to the ATP phosphoribosyltransferase family. Long subfamily. The cofactor is Mg(2+).

It is found in the cytoplasm. It catalyses the reaction 1-(5-phospho-beta-D-ribosyl)-ATP + diphosphate = 5-phospho-alpha-D-ribose 1-diphosphate + ATP. It functions in the pathway amino-acid biosynthesis; L-histidine biosynthesis; L-histidine from 5-phospho-alpha-D-ribose 1-diphosphate: step 1/9. Feedback inhibited by histidine. Functionally, catalyzes the condensation of ATP and 5-phosphoribose 1-diphosphate to form N'-(5'-phosphoribosyl)-ATP (PR-ATP). Has a crucial role in the pathway because the rate of histidine biosynthesis seems to be controlled primarily by regulation of HisG enzymatic activity. The protein is ATP phosphoribosyltransferase of Nitrobacter hamburgensis (strain DSM 10229 / NCIMB 13809 / X14).